A 244-amino-acid polypeptide reads, in one-letter code: Glutathione S-transferase theta-2 (244 aa).

The GST N-terminal domain maps to 2–82 (GLELFLDLVS…YLSCKYQTPD (81 aa)). Glutathione contacts are provided by residues 40–41 (HK), 53–54 (KL), 66–67 (ES), and 104–107 (DCIR). Residues 88 to 224 (DLQARARVHE…SILEQAAKKT (137 aa)) enclose the GST C-terminal domain.

The protein belongs to the GST superfamily. Theta family. As to quaternary structure, homodimer. Expressed at low levels in liver. In lung, expressed at low levels in ciliated bronchiolar cells, alveolar macrophages and alveolar type II cells.

It localises to the cytoplasm. Its subcellular location is the cytosol. The protein resides in the nucleus. The catalysed reaction is RX + glutathione = an S-substituted glutathione + a halide anion + H(+). Its function is as follows. Conjugation of reduced glutathione to a wide number of exogenous and endogenous hydrophobic electrophiles. Has a sulfatase activity. The polypeptide is Glutathione S-transferase theta-2 (GSTT2) (Homo sapiens (Human)).